The sequence spans 649 residues: Acetyl-coenzyme A synthetase (649 aa).

Residues 191–194, Thr309, and Asn333 each bind CoA; that span reads RGGR. ATP contacts are provided by residues 385–387, 409–414, Asp498, and Arg513; these read GEP and DTWWQT. A CoA-binding site is contributed by Ser521. Arg524 contributes to the ATP binding site. Val535, His537, and Val540 together coordinate Mg(2+). Arg582 serves as a coordination point for CoA. Lys607 bears the N6-acetyllysine mark.

Belongs to the ATP-dependent AMP-binding enzyme family. Mg(2+) serves as cofactor. In terms of processing, acetylated. Deacetylation by the SIR2-homolog deacetylase activates the enzyme.

It catalyses the reaction acetate + ATP + CoA = acetyl-CoA + AMP + diphosphate. Functionally, catalyzes the conversion of acetate into acetyl-CoA (AcCoA), an essential intermediate at the junction of anabolic and catabolic pathways. AcsA undergoes a two-step reaction. In the first half reaction, AcsA combines acetate with ATP to form acetyl-adenylate (AcAMP) intermediate. In the second half reaction, it can then transfer the acetyl group from AcAMP to the sulfhydryl group of CoA, forming the product AcCoA. The protein is Acetyl-coenzyme A synthetase of Novosphingobium aromaticivorans (strain ATCC 700278 / DSM 12444 / CCUG 56034 / CIP 105152 / NBRC 16084 / F199).